The primary structure comprises 211 residues: Superoxide dismutase [Mn], mitochondrial (211 aa).

Residues 1–24 (MLCRAVCSASRRLAPALGILGVRQ) constitute a mitochondrion transit peptide. Residue His-50 participates in Mn(2+) binding. A 3'-nitrotyrosine modification is found at Tyr-58. N6-acetyllysine; alternate occurs at positions 68 and 75. N6-succinyllysine; alternate is present on residues Lys-68 and Lys-75. Mn(2+) is bound at residue His-98. Lys-114 bears the N6-acetyllysine mark. An N6-acetyllysine; alternate mark is found at Lys-122 and Lys-130. Lys-122 and Lys-130 each carry N6-succinyllysine; alternate. Residues Asp-183 and His-187 each contribute to the Mn(2+) site. N6-acetyllysine is present on Lys-202.

It belongs to the iron/manganese superoxide dismutase family. Homotetramer. Requires Mn(2+) as cofactor. Nitrated under oxidative stress. Nitration coupled with oxidation inhibits the catalytic activity. Post-translationally, acetylation at Lys-122 decreases enzymatic activity. Deacetylated by SIRT3 upon exposure to ionizing radiations or after long fasting. In terms of processing, polyubiquitinated; leading to proteasomal degradation. Deubiquitinated by USP36 which increases protein stability.

Its subcellular location is the mitochondrion matrix. The catalysed reaction is 2 superoxide + 2 H(+) = H2O2 + O2. In terms of biological role, destroys superoxide anion radicals which are normally produced within the cells and which are toxic to biological systems. This chain is Superoxide dismutase [Mn], mitochondrial (SOD2), found in Cavia porcellus (Guinea pig).